Consider the following 78-residue polypeptide: Small ribosomal subunit protein bS20 (78 aa).

It belongs to the bacterial ribosomal protein bS20 family.

Binds directly to 16S ribosomal RNA. The polypeptide is Small ribosomal subunit protein bS20 (Streptococcus sanguinis (strain SK36)).